A 348-amino-acid chain; its full sequence is N-formyl peptide receptor 2 (348 aa).

Asn1 is a glycosylation site (N-linked (GlcNAc...) asparagine). The Extracellular segment spans residues 1–24 (NFSTPLNEHEEVSYESAGYTVLQI). The chain crosses the membrane as a helical span at residues 25–47 (LPLVVLGVTFVLGVLGNGLVIWV). Over 48-58 (AGFRMTRTVTT) the chain is Cytoplasmic. Residues 59-80 (ICYLNLPLADFSFTATLPFLIV) form a helical membrane-spanning segment. The Extracellular segment spans residues 81 to 97 (SMAMGEKWPFGWFLCKL). The cysteines at positions 95 and 173 are disulfide-linked. Residues 98 to 118 (IHIVVDINLFGSVFLIGFIAL) form a helical membrane-spanning segment. Topologically, residues 119 to 137 (DRCICVLHPVWAQNHRTVS) are cytoplasmic. A helical transmembrane segment spans residues 138–159 (LAMKVIIGPWILALVLTLPVFL). Topologically, residues 160 to 202 (FLTTVTIPNGDTYCTFNFASWGGTPEERKNVAITMLTARGIIR) are extracellular. Residues 203–223 (FVIGFSMPMSIVAICYGLIAA) form a helical membrane-spanning segment. Residues 224-239 (KIHKKGMIKSSRPLRV) are Cytoplasmic-facing. A helical membrane pass occupies residues 240 to 263 (LTAVVASFFICWFPFQLVALLSTV). Residues 264 to 283 (WLKEMLFYGKYKIINILVNP) are Extracellular-facing. A helical membrane pass occupies residues 284-303 (TSSLAFFNSCLNPMLYVFVG). Residues 304–348 (QDFRERLIRSLPTSLERALSEDSAPTNDTAAKCASPPAETELQAM) are Cytoplasmic-facing. The interval 323 to 348 (SEDSAPTNDTAAKCASPPAETELQAM) is disordered.

This sequence belongs to the G-protein coupled receptor 1 family. As to quaternary structure, interacts with APP; the interaction takes place at the cell surface and the complex is then rapidly internalized.

The protein resides in the cell membrane. Low affinity receptor for N-formyl-methionyl peptides, which are powerful neutrophil chemotactic factors. Binding of FMLP to the receptor causes activation of neutrophils. This response is mediated via a G-protein that activates a phosphatidylinositol-calcium second messenger system. Receptor for the chemokine-like protein FAM19A5, mediating FAM19A5-stimulated macrophage chemotaxis and the inhibitory effect on TNFSF11/RANKL-induced osteoclast differentiation. This is N-formyl peptide receptor 2 (FPR2) from Pongo pygmaeus (Bornean orangutan).